A 125-amino-acid chain; its full sequence is Large ribosomal subunit protein bL12 (125 aa).

It belongs to the bacterial ribosomal protein bL12 family. As to quaternary structure, homodimer. Part of the ribosomal stalk of the 50S ribosomal subunit. Forms a multimeric L10(L12)X complex, where L10 forms an elongated spine to which 2 to 4 L12 dimers bind in a sequential fashion. Binds GTP-bound translation factors.

Forms part of the ribosomal stalk which helps the ribosome interact with GTP-bound translation factors. Is thus essential for accurate translation. In Campylobacter jejuni subsp. jejuni serotype O:6 (strain 81116 / NCTC 11828), this protein is Large ribosomal subunit protein bL12.